We begin with the raw amino-acid sequence, 172 residues long: MGSQVQKSDEITFSDYLGLMTCVYEWADSYDSKDWDRLRKVIAPTLRIDYRSFLDKLWEAMPAEEFVGMVSSKQVLGDPTLRTQHFIGGTRWEKVSEDEVIGYHQLRVPHQRYKDTTMKEVTMKGHAHSANLHWYKKIDGVWKFAGLKPDIRWGEFDFDRIFEDGRETFGDK.

The substrate site is built by Y30, Y50, and F53. Residues H85 and H110 contribute to the active site. Residue N131 coordinates substrate.

This sequence belongs to the scytalone dehydratase family. As to quaternary structure, homotrimer. Each subunit contains an active site, located in the central part of the hydrophobic core of the monomer, which functions independently.

Its subcellular location is the endosome. The enzyme catalyses scytalone = 1,3,8-trihydroxynaphthalene + H2O. Its pathway is pigment biosynthesis; melanin biosynthesis. (N-phenoxypropyl)-carboxamides such as carpropamid and derivatives of norephedrine act as inhibitors of scytalone dehydratase activity. Scytalone dehydratase; part of the gene cluster that mediates the biosynthesis of dihydroxynaphthalene melanin, a bluish-green pigment and a structural component of the conidial wall. Within the pathway, catalyzes the dehydration of scytalone as well as of vermelone. Is also able to dehydrate the alternate substrate 2,3-dihydro-2,5-dihydroxy-4H-benzopyran-4-one (DDBO) to 5-hydroxy-4H-1-benzopyran-4-one (HBO). In Pyricularia oryzae (strain 70-15 / ATCC MYA-4617 / FGSC 8958) (Rice blast fungus), this protein is Scytalone dehydratase (SDH1).